The following is a 122-amino-acid chain: Large ribosomal subunit protein uL14c (122 aa).

The protein belongs to the universal ribosomal protein uL14 family. As to quaternary structure, part of the 50S ribosomal subunit.

It is found in the plastid. Its subcellular location is the chloroplast. Its function is as follows. Binds to 23S rRNA. This chain is Large ribosomal subunit protein uL14c, found in Chlorokybus atmophyticus (Soil alga).